A 240-amino-acid polypeptide reads, in one-letter code: Fibronectin type III domain-containing protein 5 (240 aa).

The span at 1–10 (MQAARGGAGR) shows a compositional bias: gly residues. The segment at 1–33 (MQAARGGAGRPGREGRGLERECERSPGPGVAMP) is disordered. Basic and acidic residues predominate over residues 11 to 24 (PGREGRGLERECER). Residues 64-155 (APVNVTVRHL…EPVLFKTPRE (92 aa)) form the Fibronectin type-III domain. N-linked (GlcNAc...) asparagine glycosylation is found at Asn67 and Asn112. The chain crosses the membrane as a helical span at residues 181-201 (GEVLIIVVVLFMWAGVIALFC). The span at 210–221 (NEPNNNKEKTKS) shows a compositional bias: basic and acidic residues. Residues 210–240 (NEPNNNKEKTKSASETSTPEHQGGGLLRSKI) are disordered. Over residues 231–240 (QGGGLLRSKI) the composition is skewed to gly residues. The Microbody targeting signal motif lies at 238–240 (SKI).

In terms of assembly, dimer; may exist in other oligomeric forms. In terms of processing, the extracellular domain is cleaved and released from the cell membrane. Post-translationally, N-Glycosylated. In adult, it is highly expressed in skeletal muscle, heart and brain.

The protein resides in the cell membrane. The protein localises to the peroxisome membrane. It is found in the secreted. Its function is as follows. Mediates beneficial effects of muscular exercise. Induces browning of white adipose tissue by stimulating UCP1 expression, at least in part, via the nuclear receptor PPARA. The chain is Fibronectin type III domain-containing protein 5 (Fndc5) from Mus musculus (Mouse).